Here is a 467-residue protein sequence, read N- to C-terminus: Phosphomethylpyrimidine synthase (467 aa).

Residues Asn-80, Met-109, Tyr-139, His-175, 195-197, 236-239, and Glu-275 each bind substrate; these read SRG and DSLR. His-279 is a binding site for Zn(2+). Residue Tyr-302 coordinates substrate. His-343 contacts Zn(2+). Cys-423, Cys-426, and Cys-431 together coordinate [4Fe-4S] cluster.

Belongs to the ThiC family. It depends on [4Fe-4S] cluster as a cofactor.

It catalyses the reaction 5-amino-1-(5-phospho-beta-D-ribosyl)imidazole + S-adenosyl-L-methionine = 4-amino-2-methyl-5-(phosphooxymethyl)pyrimidine + CO + 5'-deoxyadenosine + formate + L-methionine + 3 H(+). Its pathway is cofactor biosynthesis; thiamine diphosphate biosynthesis. Functionally, catalyzes the synthesis of the hydroxymethylpyrimidine phosphate (HMP-P) moiety of thiamine from aminoimidazole ribotide (AIR) in a radical S-adenosyl-L-methionine (SAM)-dependent reaction. The polypeptide is Phosphomethylpyrimidine synthase (Synechococcus sp. (strain WH7803)).